A 350-amino-acid polypeptide reads, in one-letter code: MIALRENIAEMAGYVPGFQPLDVDSYIKLNTNENPYPPSPKVLEAIAKEAGEGLRRYPDAASRLAREEAAKVYGFDPSWIIMANGSDEVLNNLIRACAGEGEEIAFINPSYSYYGTLAEVQGARVRTFGLSESFEPEGIPEHYDGKLFFLTNPNAPLGFTYSQRYIADLAGRLSGVLVVDEAYVDFAEETSLELVRSFDNVVVTRTFSKSYSLAGMRLGLAIARPEIIAALNKIRDHYNLDRLAQAAAAAALADQPYFQECVRKIKETRAWFTAELQQLGYQVIPSSGNFVFASPPDRDGTRIYQGLYDRKILVRHFTDPKLAHGLRISIGSREEMEQTVKALRELGPGR.

At K209 the chain carries N6-(pyridoxal phosphate)lysine.

The protein belongs to the class-II pyridoxal-phosphate-dependent aminotransferase family. Histidinol-phosphate aminotransferase subfamily. Homodimer. Requires pyridoxal 5'-phosphate as cofactor.

The enzyme catalyses L-histidinol phosphate + 2-oxoglutarate = 3-(imidazol-4-yl)-2-oxopropyl phosphate + L-glutamate. It functions in the pathway amino-acid biosynthesis; L-histidine biosynthesis; L-histidine from 5-phospho-alpha-D-ribose 1-diphosphate: step 7/9. This is Histidinol-phosphate aminotransferase from Citrifermentans bemidjiense (strain ATCC BAA-1014 / DSM 16622 / JCM 12645 / Bem) (Geobacter bemidjiensis).